A 202-amino-acid chain; its full sequence is ATP-dependent Clp protease proteolytic subunit (202 aa).

The Nucleophile role is filled by serine 107. Histidine 132 is an active-site residue.

Belongs to the peptidase S14 family. As to quaternary structure, fourteen ClpP subunits assemble into 2 heptameric rings which stack back to back to give a disk-like structure with a central cavity, resembling the structure of eukaryotic proteasomes.

The protein resides in the cytoplasm. It catalyses the reaction Hydrolysis of proteins to small peptides in the presence of ATP and magnesium. alpha-casein is the usual test substrate. In the absence of ATP, only oligopeptides shorter than five residues are hydrolyzed (such as succinyl-Leu-Tyr-|-NHMec, and Leu-Tyr-Leu-|-Tyr-Trp, in which cleavage of the -Tyr-|-Leu- and -Tyr-|-Trp bonds also occurs).. Functionally, cleaves peptides in various proteins in a process that requires ATP hydrolysis. Has a chymotrypsin-like activity. Plays a major role in the degradation of misfolded proteins. The polypeptide is ATP-dependent Clp protease proteolytic subunit (Shewanella amazonensis (strain ATCC BAA-1098 / SB2B)).